Here is a 532-residue protein sequence, read N- to C-terminus: CTP synthase (532 aa).

Positions 1 to 267 (MAKFVFVTGG…HGLVLDQLQI (267 aa)) are amidoligase domain. Residue Ser13 coordinates CTP. UTP is bound at residue Ser13. Position 14–19 (14–19 (GLGKGI)) interacts with ATP. Tyr54 is a binding site for L-glutamine. Asp71 is an ATP binding site. Mg(2+)-binding residues include Asp71 and Glu141. Residues 148 to 150 (DIE), 188 to 193 (KTKPIQ), and Lys224 each bind CTP. Residues 188 to 193 (KTKPIQ) and Lys224 each bind UTP. The region spanning 292-532 (EVTFVGKYIE…GFVEAIVNNK (241 aa)) is the Glutamine amidotransferase type-1 domain. Gly354 contacts L-glutamine. Cys381 (nucleophile; for glutamine hydrolysis) is an active-site residue. L-glutamine is bound by residues 382-385 (LGMQ), Glu405, and Arg462. Residues His507 and Glu509 contribute to the active site.

It belongs to the CTP synthase family. As to quaternary structure, homotetramer.

The enzyme catalyses UTP + L-glutamine + ATP + H2O = CTP + L-glutamate + ADP + phosphate + 2 H(+). It catalyses the reaction L-glutamine + H2O = L-glutamate + NH4(+). The catalysed reaction is UTP + NH4(+) + ATP = CTP + ADP + phosphate + 2 H(+). It participates in pyrimidine metabolism; CTP biosynthesis via de novo pathway; CTP from UDP: step 2/2. Allosterically activated by GTP, when glutamine is the substrate; GTP has no effect on the reaction when ammonia is the substrate. The allosteric effector GTP functions by stabilizing the protein conformation that binds the tetrahedral intermediate(s) formed during glutamine hydrolysis. Inhibited by the product CTP, via allosteric rather than competitive inhibition. Its function is as follows. Catalyzes the ATP-dependent amination of UTP to CTP with either L-glutamine or ammonia as the source of nitrogen. Regulates intracellular CTP levels through interactions with the four ribonucleotide triphosphates. The polypeptide is CTP synthase (Mesoplasma florum (strain ATCC 33453 / NBRC 100688 / NCTC 11704 / L1) (Acholeplasma florum)).